We begin with the raw amino-acid sequence, 104 residues long: Protein RnfH (104 aa).

It belongs to the UPF0125 (RnfH) family.

In Pseudomonas savastanoi pv. phaseolicola (strain 1448A / Race 6) (Pseudomonas syringae pv. phaseolicola (strain 1448A / Race 6)), this protein is Protein RnfH.